We begin with the raw amino-acid sequence, 89 residues long: Cell division protein ZapA (89 aa).

It belongs to the ZapA family. Type 2 subfamily. As to quaternary structure, homodimer. Interacts with FtsZ.

The protein resides in the cytoplasm. Its function is as follows. Activator of cell division through the inhibition of FtsZ GTPase activity, therefore promoting FtsZ assembly into bundles of protofilaments necessary for the formation of the division Z ring. It is recruited early at mid-cell but it is not essential for cell division. This chain is Cell division protein ZapA, found in Bacillus mycoides (strain KBAB4) (Bacillus weihenstephanensis).